The primary structure comprises 704 residues: Rabphilin-3A (704 aa).

Residues 1–12 are compositionally biased toward polar residues; that stretch reads MTDTVFSSSSSR. The segment at 1 to 52 is disordered; that stretch reads MTDTVFSSSSSRWMCPSDRPLQSNDKEQLQTGWSVHPSGQPDRQRKQEELTD. Residues 44-161 enclose the RabBD domain; the sequence is QRKQEELTDE…KRSGAWFFKG (118 aa). The FYVE-type zinc-finger motif lies at 92–149; it reads GDGVNRCILCGEQLGMLGSACVVCEDCKKNVCTKCGVETSNNRPHPVWLCKICIEQRE. The Zn(2+) site is built by cysteine 98, cysteine 101, cysteine 115, cysteine 118, cysteine 123, cysteine 126, cysteine 141, and cysteine 144. The interval 167–398 is disordered; sequence LPQPMPIKKN…EEEANSYDSD (232 aa). A compositionally biased stretch (basic and acidic residues) spans 205-214; that stretch reads TRGDTEDRRG. Arginine 229 bears the Omega-N-methylarginine mark. Serine 277 is modified (phosphoserine). The segment covering 279–290 has biased composition (low complexity); sequence QASRPAPASMQS. A compositionally biased stretch (pro residues) spans 291–310; that stretch reads PAPPQPGQPGPPGGSRPSPG. Over residues 366–380 the composition is skewed to low complexity; that stretch reads QASAAAPQPVVASAR. Residues 385-398 show a composition bias toward acidic residues; sequence PEEDEEEANSYDSD. Positions 402-524 constitute a C2 1 domain; the sequence is TLGALEFSLL…KPNQRKNFNI (123 aa). Ca(2+) contacts are provided by methionine 432, aspartate 433, aspartate 439, aspartate 494, glutamate 495, aspartate 496, glutamate 502, glutamate 549, aspartate 591, aspartate 597, aspartate 651, tyrosine 652, aspartate 653, and aspartate 659. The C2 2 domain occupies 560 to 693; that stretch reads ERGKILVSLM…NKDKKIERWH (134 aa). Residues serine 702 and serine 703 each carry the phosphoserine modification.

In terms of assembly, interacts with RAB3B, RAB3C, RAB3D, RAB8A, RAB27A and RAB27B. Interacts with RAB3A; this interaction recruits RPH3A to synaptic vesicules. Interacts (via C2B domain) with SNAP25. Interacts with deubiquitinating enzyme CAND1; this interaction results in the deubiquitination of RPH3A. Interacts with GRIN2A and DLG4; this ternary complex regulates NMDA receptor composition at postsynaptic membranes. Interacts with SNCA. The cofactor is Ca(2+). In terms of processing, ubiquitinated. Deubiquitinated by CAND1 to prevent its degradation. As to expression, specifically expressed in brain.

Its subcellular location is the cytoplasmic vesicle. The protein resides in the secretory vesicle. It localises to the synaptic vesicle membrane. It is found in the cell projection. The protein localises to the dendritic spine. Its subcellular location is the postsynaptic cell membrane. The protein resides in the membrane. Its function is as follows. Plays an essential role in docking and fusion steps of regulated exocytosis. At the presynaptic level, RPH3A is recruited by RAB3A to the synaptic vesicle membrane in a GTP-dependent manner where it modulates synaptic vesicle trafficking and calcium-triggered neurotransmitter release. In the post-synaptic compartment, forms a ternary complex with GRIN2A and DLG4 and regulates NMDA receptor stability. Also plays a role in the exocytosis of arginine vasopressin hormone. The protein is Rabphilin-3A (RPH3A) of Bos taurus (Bovine).